We begin with the raw amino-acid sequence, 320 residues long: Mycothiol acetyltransferase (320 aa).

2 N-acetyltransferase domains span residues 8-141 (SHLT…RSLR) and 152-320 (LQIR…AALA). 1D-myo-inositol 2-(L-cysteinylamino)-2-deoxy-alpha-D-glucopyranoside is bound at residue Glu-36. Residues 80–82 (LVV) and 88–93 (RRGIAT) contribute to the acetyl-CoA site. 1D-myo-inositol 2-(L-cysteinylamino)-2-deoxy-alpha-D-glucopyranoside contacts are provided by Glu-179, Lys-229, and Glu-239. Acetyl-CoA is bound by residues 243 to 245 (LGV) and 250 to 256 (QGRGLGR). Tyr-284 is a 1D-myo-inositol 2-(L-cysteinylamino)-2-deoxy-alpha-D-glucopyranoside binding site. 289–294 (NIAAVR) serves as a coordination point for acetyl-CoA.

It belongs to the acetyltransferase family. MshD subfamily. Monomer.

It catalyses the reaction 1D-myo-inositol 2-(L-cysteinylamino)-2-deoxy-alpha-D-glucopyranoside + acetyl-CoA = mycothiol + CoA + H(+). Its function is as follows. Catalyzes the transfer of acetyl from acetyl-CoA to desacetylmycothiol (Cys-GlcN-Ins) to form mycothiol. The chain is Mycothiol acetyltransferase from Mycobacterium ulcerans (strain Agy99).